Reading from the N-terminus, the 671-residue chain is DNA ligase (671 aa).

NAD(+) is bound by residues 37 to 41, 86 to 87, and Glu-117; these read DIEYD and SL. Lys-119 serves as the catalytic N6-AMP-lysine intermediate. NAD(+)-binding residues include Arg-140, Glu-177, Lys-295, and Lys-319. 4 residues coordinate Zn(2+): Cys-413, Cys-416, Cys-431, and Cys-437. The region spanning 594–671 is the BRCT domain; that stretch reads IISAAVFGKT…DEEEMLNLLK (78 aa).

This sequence belongs to the NAD-dependent DNA ligase family. LigA subfamily. Mg(2+) serves as cofactor. Requires Mn(2+) as cofactor.

The enzyme catalyses NAD(+) + (deoxyribonucleotide)n-3'-hydroxyl + 5'-phospho-(deoxyribonucleotide)m = (deoxyribonucleotide)n+m + AMP + beta-nicotinamide D-nucleotide.. In terms of biological role, DNA ligase that catalyzes the formation of phosphodiester linkages between 5'-phosphoryl and 3'-hydroxyl groups in double-stranded DNA using NAD as a coenzyme and as the energy source for the reaction. It is essential for DNA replication and repair of damaged DNA. The chain is DNA ligase from Polynucleobacter asymbioticus (strain DSM 18221 / CIP 109841 / QLW-P1DMWA-1) (Polynucleobacter necessarius subsp. asymbioticus).